A 98-amino-acid chain; its full sequence is Large ribosomal subunit protein uL23 (98 aa).

Belongs to the universal ribosomal protein uL23 family. In terms of assembly, part of the 50S ribosomal subunit. Contacts protein L29, and trigger factor when it is bound to the ribosome.

One of the early assembly proteins it binds 23S rRNA. One of the proteins that surrounds the polypeptide exit tunnel on the outside of the ribosome. Forms the main docking site for trigger factor binding to the ribosome. The protein is Large ribosomal subunit protein uL23 of Clostridium botulinum (strain Eklund 17B / Type B).